Here is a 242-residue protein sequence, read N- to C-terminus: Carboxy-S-adenosyl-L-methionine synthase (242 aa).

S-adenosyl-L-methionine is bound by residues Y39, 64–66 (GCS), 89–90 (DN), 117–118 (DI), N132, and R199.

It belongs to the class I-like SAM-binding methyltransferase superfamily. Cx-SAM synthase family. As to quaternary structure, homodimer.

It carries out the reaction prephenate + S-adenosyl-L-methionine = carboxy-S-adenosyl-L-methionine + 3-phenylpyruvate + H2O. Functionally, catalyzes the conversion of S-adenosyl-L-methionine (SAM) to carboxy-S-adenosyl-L-methionine (Cx-SAM). The protein is Carboxy-S-adenosyl-L-methionine synthase of Psychromonas ingrahamii (strain DSM 17664 / CCUG 51855 / 37).